We begin with the raw amino-acid sequence, 533 residues long: MSSLVSEIARRRTFAIISHPDAGKTTLTEKLLWFGGAIQVAGEVRARKADRHATSDWMELEKQRGISVTSSVMQFPYRREAADGKAEENIVNLLDTPGHEDFSEDTYRTLTAVDSAVMVIDSVNGVEAQTIKLLNVCRLRATPILTFINKLDREGRSPIELLDEIEDVLQIQCAPMTWPIGMGKAFRGVYHLIDDKVQLFDPHGDKGTAAILDGLDNPELDRILGSQADELRLEIELVRGASHTFDKEAFLAGKQTPVYFGSAINNFGVQSLLDALCQLSPPPLARNTESRVVEPQEGKFTGFVFKIQANMDPRHRDRIAFVRVCSGRFERGMKLLHVSQAKTVAINNAITFMAQDRNTTEEAYAGDIIGVPNHGTIRLGDVFTEGEPLKFTGIPSFAPEFFRRARLNNPLKVKQLQKGLQQLAEEGATQMFRPLASNELVLGAVGILQFDVVAHRLEHEYGVDAIFESHECATARWLKGAPAEIEKLIAKAGHNVALDGAGDHVYLAPSMVNLRLTQEKFPDVQFLETREIV.

The region spanning 9 to 284 is the tr-type G domain; that stretch reads ARRRTFAIIS…ALCQLSPPPL (276 aa). GTP-binding positions include 18-25, 95-99, and 149-152; these read SHPDAGKT, DTPGH, and NKLD.

It belongs to the TRAFAC class translation factor GTPase superfamily. Classic translation factor GTPase family. PrfC subfamily.

It localises to the cytoplasm. Its function is as follows. Increases the formation of ribosomal termination complexes and stimulates activities of RF-1 and RF-2. It binds guanine nucleotides and has strong preference for UGA stop codons. It may interact directly with the ribosome. The stimulation of RF-1 and RF-2 is significantly reduced by GTP and GDP, but not by GMP. In Cupriavidus pinatubonensis (strain JMP 134 / LMG 1197) (Cupriavidus necator (strain JMP 134)), this protein is Peptide chain release factor 3.